Reading from the N-terminus, the 159-residue chain is Ribosomal RNA large subunit methyltransferase H (159 aa).

S-adenosyl-L-methionine-binding positions include leucine 76, glycine 108, and 127–132 (LSRLTF).

Belongs to the RNA methyltransferase RlmH family. In terms of assembly, homodimer.

It localises to the cytoplasm. It catalyses the reaction pseudouridine(1915) in 23S rRNA + S-adenosyl-L-methionine = N(3)-methylpseudouridine(1915) in 23S rRNA + S-adenosyl-L-homocysteine + H(+). Its function is as follows. Specifically methylates the pseudouridine at position 1915 (m3Psi1915) in 23S rRNA. The protein is Ribosomal RNA large subunit methyltransferase H of Syntrophomonas wolfei subsp. wolfei (strain DSM 2245B / Goettingen).